The primary structure comprises 734 residues: Photosystem I P700 chlorophyll a apoprotein A2 (734 aa).

8 consecutive transmembrane segments (helical) span residues isoleucine 46–alanine 69, leucine 135–glutamate 158, leucine 175–isoleucine 199, isoleucine 273–tyrosine 291, leucine 330–tyrosine 353, alanine 369–isoleucine 395, alanine 417–histidine 439, and phenylalanine 517–valine 535. Residues cysteine 559 and cysteine 568 each coordinate [4Fe-4S] cluster. The next 2 membrane-spanning stretches (helical) occupy residues alanine 575 to tryptophan 596 and leucine 643 to isoleucine 665. Chlorophyll a-binding residues include histidine 654, methionine 662, and tyrosine 670. Residue tryptophan 671 coordinates phylloquinone. A helical membrane pass occupies residues leucine 707 to alanine 727.

It belongs to the PsaA/PsaB family. As to quaternary structure, the PsaA/B heterodimer binds the P700 chlorophyll special pair and subsequent electron acceptors. PSI consists of a core antenna complex that captures photons, and an electron transfer chain that converts photonic excitation into a charge separation. The eukaryotic PSI reaction center is composed of at least 11 subunits. P700 is a chlorophyll a/chlorophyll a' dimer, A0 is one or more chlorophyll a, A1 is one or both phylloquinones and FX is a shared 4Fe-4S iron-sulfur center. is required as a cofactor.

Its subcellular location is the plastid. The protein resides in the chloroplast thylakoid membrane. It catalyses the reaction reduced [plastocyanin] + hnu + oxidized [2Fe-2S]-[ferredoxin] = oxidized [plastocyanin] + reduced [2Fe-2S]-[ferredoxin]. Functionally, psaA and PsaB bind P700, the primary electron donor of photosystem I (PSI), as well as the electron acceptors A0, A1 and FX. PSI is a plastocyanin/cytochrome c6-ferredoxin oxidoreductase, converting photonic excitation into a charge separation, which transfers an electron from the donor P700 chlorophyll pair to the spectroscopically characterized acceptors A0, A1, FX, FA and FB in turn. Oxidized P700 is reduced on the lumenal side of the thylakoid membrane by plastocyanin or cytochrome c6. This chain is Photosystem I P700 chlorophyll a apoprotein A2, found in Euglena gracilis.